Consider the following 248-residue polypeptide: Adenosylcobinamide-GDP ribazoletransferase (248 aa).

A run of 7 helical transmembrane segments spans residues 24-44 (EINLKKGSALLPFVGVIIGAW), 70-90 (IIITGGFHVDALADTADGLFS), 106-126 (VGANGVIAICFYFLFYGALFL), 134-154 (IGWLFFVLPIVAKGVTMLLFA), 168-188 (IFLGVPWWPIVIAQVIVLVAL), 189-209 (GAFFSYIGVIAYAGVILFTII), and 228-248 (AGGQMGQLICLFCLVLLWGLI).

It belongs to the CobS family. Mg(2+) serves as cofactor.

It localises to the cell membrane. The enzyme catalyses alpha-ribazole + adenosylcob(III)inamide-GDP = adenosylcob(III)alamin + GMP + H(+). It carries out the reaction alpha-ribazole 5'-phosphate + adenosylcob(III)inamide-GDP = adenosylcob(III)alamin 5'-phosphate + GMP + H(+). Its pathway is cofactor biosynthesis; adenosylcobalamin biosynthesis; adenosylcobalamin from cob(II)yrinate a,c-diamide: step 7/7. Joins adenosylcobinamide-GDP and alpha-ribazole to generate adenosylcobalamin (Ado-cobalamin). Also synthesizes adenosylcobalamin 5'-phosphate from adenosylcobinamide-GDP and alpha-ribazole 5'-phosphate. This is Adenosylcobinamide-GDP ribazoletransferase from Listeria monocytogenes serotype 4a (strain HCC23).